We begin with the raw amino-acid sequence, 141 residues long: Hemoglobin subunit alpha (141 aa).

Positions 1-141 (VLSSADKANI…VSTVLTSKYR (141 aa)) constitute a Globin domain. Ser3 is modified (phosphoserine). Lys7 and Lys11 each carry N6-succinyllysine. N6-acetyllysine; alternate is present on Lys16. Lys16 bears the N6-succinyllysine; alternate mark. Tyr24 is subject to Phosphotyrosine. Lys40 is modified (N6-succinyllysine). Phosphoserine is present on Ser49. His58 is a binding site for O2. His87 serves as a coordination point for heme b. Ser102 carries the post-translational modification Phosphoserine. Thr108 carries the phosphothreonine modification. Phosphoserine is present on Ser131. Phosphothreonine is present on residues Thr134 and Thr137. Position 138 is a phosphoserine (Ser138).

It belongs to the globin family. In terms of assembly, heterotetramer of two alpha chains and two beta chains. Red blood cells.

Its function is as follows. Involved in oxygen transport from the lung to the various peripheral tissues. Hemopressin acts as an antagonist peptide of the cannabinoid receptor CNR1. Hemopressin-binding efficiently blocks cannabinoid receptor CNR1 and subsequent signaling. The chain is Hemoglobin subunit alpha (HBA) from Crocuta crocuta (Spotted hyena).